Reading from the N-terminus, the 204-residue chain is Guanylate kinase (204 aa).

Positions 5–184 (GLLLVLSGPS…AVNHIKAIVD (180 aa)) constitute a Guanylate kinase-like domain. 12 to 19 (GPSGVGKG) contacts ATP.

The protein belongs to the guanylate kinase family.

Its subcellular location is the cytoplasm. It carries out the reaction GMP + ATP = GDP + ADP. Essential for recycling GMP and indirectly, cGMP. The protein is Guanylate kinase of Lactobacillus delbrueckii subsp. bulgaricus (strain ATCC 11842 / DSM 20081 / BCRC 10696 / JCM 1002 / NBRC 13953 / NCIMB 11778 / NCTC 12712 / WDCM 00102 / Lb 14).